Here is a 405-residue protein sequence, read N- to C-terminus: Tryptophan synthase beta chain (405 aa).

Position 98 is an N6-(pyridoxal phosphate)lysine (lysine 98).

It belongs to the TrpB family. Tetramer of two alpha and two beta chains. Requires pyridoxal 5'-phosphate as cofactor.

The catalysed reaction is (1S,2R)-1-C-(indol-3-yl)glycerol 3-phosphate + L-serine = D-glyceraldehyde 3-phosphate + L-tryptophan + H2O. The protein operates within amino-acid biosynthesis; L-tryptophan biosynthesis; L-tryptophan from chorismate: step 5/5. In terms of biological role, the beta subunit is responsible for the synthesis of L-tryptophan from indole and L-serine. The protein is Tryptophan synthase beta chain of Parvibaculum lavamentivorans (strain DS-1 / DSM 13023 / NCIMB 13966).